A 1545-amino-acid polypeptide reads, in one-letter code: Tricalbin-3 (1545 aa).

Positions Met1 to Ser89 are disordered. At Met1–Asp206 the chain is on the cytoplasmic side. The segment covering Thr62–Ser80 has biased composition (polar residues). A phosphoserine mark is found at Ser67 and Ser112. The helical transmembrane segment at Trp207–Ile227 threads the bilayer. Gly228 is a topological domain (extracellular). Residues Phe229–Tyr249 traverse the membrane as a helical segment. Residues Thr250–Gln1545 lie on the Cytoplasmic side of the membrane. Residues Arg272 to Glu479 enclose the SMP-LTD domain. Residues Pro470–Thr596 enclose the C2 1 domain. Residues Glu620–Thr660 adopt a coiled-coil conformation. Residues Glu624–Asp641 are compositionally biased toward basic and acidic residues. The interval Glu624–Thr660 is disordered. Residues Glu642 to Ser658 show a composition bias toward acidic residues. C2 domains lie at Thr646–Phe763 and Met783–Tyr897. The stretch at Ser937–Asn972 forms a coiled coil. One can recognise a C2 4 domain in the interval Pro1119–Leu1234. Ca(2+)-binding residues include Asp1150, Asp1156, Asp1204, Asp1206, and Asp1212. Residues Leu1304–Ser1404 are disordered. The span at Ser1318–Lys1328 shows a compositional bias: polar residues. Residues Lys1329–Ser1340 are compositionally biased toward basic and acidic residues. Ser1340, Ser1342, and Ser1346 each carry phosphoserine. Over residues Pro1341–Pro1351 the composition is skewed to polar residues. Thr1350 bears the Phosphothreonine mark. Phosphoserine is present on Ser1354. Over residues Val1361–Ser1373 the composition is skewed to polar residues. Low complexity predominate over residues Lys1377 to Ser1404. Positions Ser1396–Leu1514 constitute a C2 5 domain. Ser1400 carries the post-translational modification Phosphoserine.

This sequence belongs to the tricalbin family. As to quaternary structure, interacts with TCB2 via its C-terminal domain. Requires Ca(2+) as cofactor.

The protein resides in the cell membrane. The protein localises to the endoplasmic reticulum membrane. In terms of biological role, may play a role in membrane trafficking. The sequence is that of Tricalbin-3 (TCB3) from Saccharomyces cerevisiae (strain ATCC 204508 / S288c) (Baker's yeast).